Here is a 599-residue protein sequence, read N- to C-terminus: Aspartate--tRNA(Asp/Asn) ligase (599 aa).

Glu-174 contacts L-aspartate. Positions 198–201 (QLFK) are aspartate. Arg-220 contributes to the L-aspartate binding site. Residues 220–222 (RDE) and Gln-229 contribute to the ATP site. Residue His-457 coordinates L-aspartate. Glu-491 contributes to the ATP binding site. Arg-498 is a binding site for L-aspartate. 543–546 (GLDR) is a binding site for ATP.

This sequence belongs to the class-II aminoacyl-tRNA synthetase family. Type 1 subfamily. As to quaternary structure, homodimer.

The protein resides in the cytoplasm. The catalysed reaction is tRNA(Asx) + L-aspartate + ATP = L-aspartyl-tRNA(Asx) + AMP + diphosphate. Functionally, aspartyl-tRNA synthetase with relaxed tRNA specificity since it is able to aspartylate not only its cognate tRNA(Asp) but also tRNA(Asn). Reaction proceeds in two steps: L-aspartate is first activated by ATP to form Asp-AMP and then transferred to the acceptor end of tRNA(Asp/Asn). In Paraburkholderia xenovorans (strain LB400), this protein is Aspartate--tRNA(Asp/Asn) ligase.